The chain runs to 482 residues: MKTKNTFLVSTKSETSIGQITQIIGPVLDVSFPPGNLPNIYNSLIVKGQKDDRAFSVTCEVQQLLGNNTVRAVAMSATDGLTRGMKVINTGACLSVPVGKATLGRIFNVLGEPVDNLGPVDTDTTFPIHRPAPAFPQLDTNLSIFETGIKVVDLLAPYRRGGKIGLFGGAGVGKTVLIMELINNIAKAHGGVSVFGGVGERTREGNDLYMEMKESGVINEKNIAESKVALVYGQMNEPPGARMRVGLTALAMAEYFRDVNEQDVLLFIDNIFRFVQAGSEVSALLGRMPSAVGYQPTLSTEMGSLQERITSTKKGSITSIQAVYVPADDLTDPAPATTFAHLDATTVLSRGLAAKGIYPAVDPLDSTSTMLQPEIVGEQHYEIAQGVKQTLQRYKELQDIIAILGLDELSEEDRLTVARARKIERFLSQPFFVAEVFTGSPGKYVSLIETIRGFQMILSGDLDGLPEQSFYLVGNIDEVISS.

Residue 168-175 participates in ATP binding; the sequence is GGAGVGKT.

It belongs to the ATPase alpha/beta chains family. In terms of assembly, F-type ATPases have 2 components, CF(1) - the catalytic core - and CF(0) - the membrane proton channel. CF(1) has five subunits: alpha(3), beta(3), gamma(1), delta(1), epsilon(1). CF(0) has four main subunits: a(1), b(1), b'(1) and c(9-12).

The protein resides in the plastid. It localises to the chloroplast thylakoid membrane. The enzyme catalyses ATP + H2O + 4 H(+)(in) = ADP + phosphate + 5 H(+)(out). In terms of biological role, produces ATP from ADP in the presence of a proton gradient across the membrane. The catalytic sites are hosted primarily by the beta subunits. In Gnetum parvifolium (Small-leaved jointfir), this protein is ATP synthase subunit beta, chloroplastic.